The primary structure comprises 328 residues: Transcription factor bHLH25 (328 aa).

The tract at residues Pro-125–Asp-152 is disordered. Positions Ser-148–Leu-197 constitute a bHLH domain.

In terms of assembly, homodimer. Expressed in flowers.

The protein localises to the nucleus. This Arabidopsis thaliana (Mouse-ear cress) protein is Transcription factor bHLH25 (BHLH25).